Reading from the N-terminus, the 1669-residue chain is MGPRLSVWLLLLPAALLLHEEHSRAAAKGGCAGSGCGKCDCHGVKGQKGERGLPGLQGVIGFPGMQGPEGPQGPPGQKGDTGEPGLPGTKGTRGPPGASGYPGNPGLPGIPGQDGPPGPPGIPGCNGTKGERGPLGPPGLPGFAGNPGPPGLPGMKGDPGEILGHVPGMLLKGERGFPGIPGTPGPPGLPGLQGPVGPPGFTGPPGPPGPPGPPGEKGQMGLSFQGPKGDKGDQGVSGPPGVPGQAQVQEKGDFATKGEKGQKGEPGFQGMPGVGEKGEPGKPGPRGKPGKDGDKGEKGSPGFPGEPGYPGLIGRQGPQGEKGEAGPPGPPGIVIGTGPLGEKGERGYPGTPGPRGEPGPKGFPGLPGQPGPPGLPVPGQAGAPGFPGERGEKGDRGFPGTSLPGPSGRDGLPGPPGSPGPPGQPGYTNGIVECQPGPPGDQGPPGIPGQPGFIGEIGEKGQKGESCLICDIDGYRGPPGPQGPPGEIGFPGQPGAKGDRGLPGRDGVAGVPGPQGTPGLIGQPGAKGEPGEFYFDLRLKGDKGDPGFPGQPGMPGRAGSPGRDGHPGLPGPKGSPGSVGLKGERGPPGGVGFPGSRGDTGPPGPPGYGPAGPIGDKGQAGFPGGPGSPGLPGPKGEPGKIVPLPGPPGAEGLPGSPGFPGPQGDRGFPGTPGRPGLPGEKGAVGQPGIGFPGPPGPKGVDGLPGDMGPPGTPGRPGFNGLPGNPGVQGQKGEPGVGLPGLKGLPGLPGIPGTPGEKGSIGVPGVPGEHGAIGPPGLQGIRGEPGPPGLPGSVGSPGVPGIGPPGARGPPGGQGPPGLSGPPGIKGEKGFPGFPGLDMPGPKGDKGAQGLPGITGQSGLPGLPGQQGAPGIPGFPGSKGEMGVMGTPGQPGSPGPVGAPGLPGEKGDHGFPGSSGPRGDPGLKGDKGDVGLPGKPGSMDKVDMGSMKGQKGDQGEKGQIGPIGEKGSRGDPGTPGVPGKDGQAGQPGQPGPKGDPGISGTPGAPGLPGPKGSVGGMGLPGTPGEKGVPGIPGPQGSPGLPGDKGAKGEKGQAGPPGIGIPGLRGEKGDQGIAGFPGSPGEKGEKGSIGIPGMPGSPGLKGSPGSVGYPGSPGLPGEKGDKGLPGLDGIPGVKGEAGLPGTPGPTGPAGQKGEPGSDGIPGSAGEKGEPGLPGRGFPGFPGAKGDKGSKGEVGFPGLAGSPGIPGSKGEQGFMGPPGPQGQPGLPGSPGHATEGPKGDRGPQGQPGLPGLPGPMGPPGLPGIDGVKGDKGNPGWPGAPGVPGPKGDPGFQGMPGIGGSPGITGSKGDMGPPGVPGFQGPKGLPGLQGIKGDQGDQGVPGAKGLPGPPGPPGPYDIIKGEPGLPGPEGPPGLKGLQGLPGPKGQQGVTGLVGIPGPPGIPGFDGAPGQKGEMGPAGPTGPRGFPGPPGPDGLPGSMGPPGTPSVDHGFLVTRHSQTIDDPQCPSGTKILYHGYSLLYVQGNERAHGQDLGTAGSCLRKFSTMPFLFCNINNVCNFASRNDYSYWLSTPEPMPMSMAPITGENIRPFISRCAVCEAPAMVMAVHSQTIQIPPCPSGWSSLWIGYSFVMHTSAGAEGSGQALASPGSCLEEFRSAPFIECHGRGTCNYYANAYSFWLATIERSEMFKKPTPSTLKAGELRTHVSRCQVCMRRT.

Positions Met1–Ala27 are cleaved as a signal peptide. Residues Lys28–Lys172 constitute a propeptide, N-terminal propeptide (7S domain). Disordered regions lie at residues Lys48–Glu459, Gly504–Gln1382, and Pro1404–Pro1431. An N-linked (GlcNAc...) asparagine glycan is attached at Asn126. The tract at residues Gly173–Pro1440 is triple-helical region. Over residues Val196 to Pro214 the composition is skewed to pro residues. 3-hydroxyproline occurs at positions 204, 207, and 210. Over residues Gln234–Gln249 the composition is skewed to low complexity. Composition is skewed to basic and acidic residues over residues Glu250–Lys263 and Pro289–Lys298. Composition is skewed to pro residues over residues Pro367–Pro376, Pro413–Gln424, and Pro436–Pro448. Over residues Phe535–Asp545 the composition is skewed to basic and acidic residues. A compositionally biased stretch (gly residues) spans Gly586–Gly595. A 3-hydroxyproline mark is found at Pro587 and Pro602. Pro603 carries the 4-hydroxyproline modification. 3-hydroxyproline is present on Pro605. Residue Pro606 is modified to 4-hydroxyproline. A compositionally biased stretch (low complexity) spans Ala611 to Ala620. The span at Gly621–Gly630 shows a compositional bias: gly residues. 4-hydroxyproline is present on residues Pro623, Pro626, Pro629, and Pro632. 3-hydroxyproline is present on Pro647. Residues Gly797 to Gly817 are compositionally biased toward gly residues. Composition is skewed to low complexity over residues Gln856 to Pro875 and Pro977 to Pro986. Residues Gly1011–Gly1020 show a composition bias toward gly residues. Over residues Ser1086–Pro1114 the composition is skewed to low complexity. Position 1214 is a 3-hydroxyproline (Pro1214). The span at Pro1247–Leu1258 shows a compositional bias: pro residues. Gly residues predominate over residues Gly1290 to Gly1299. Positions Pro1368–Gln1382 are enriched in low complexity. 3-hydroxyproline is present on Pro1424. In terms of domain architecture, Collagen IV NC1 spans Gly1445–Thr1669. 6 disulfide bridges follow: Cys1460-Cys1551, Cys1493-Cys1548, Cys1505-Cys1511, Cys1570-Cys1665, Cys1604-Cys1662, and Cys1616-Cys1622. An S-Lysyl-methionine sulfilimine (Met-Lys) (interchain with K-1651) cross-link involves residue Met1533. Lys1651 is covalently cross-linked (S-Lysyl-methionine sulfilimine (Lys-Met) (interchain with M-1533)).

This sequence belongs to the type IV collagen family. In terms of assembly, there are six type IV collagen isoforms, alpha 1(IV)-alpha 6(IV), each of which can form a triple helix structure with 2 other chains to generate type IV collagen network. Interacts with EFEMP2. Lysines at the third position of the tripeptide repeating unit (G-X-Y) are hydroxylated. The modified lysines can be O-glycosylated. Post-translationally, contains 4-hydroxyproline. Prolines at the third position of the tripeptide repeating unit (G-X-Y) are hydroxylated in some or all of the chains. In terms of processing, contains 3-hydroxyproline. This modification occurs on the first proline residue in the sequence motif Gly-Pro-Hyp, where Hyp is 4-hydroxyproline. Type IV collagens contain numerous cysteine residues which are involved in inter- and intramolecular disulfide bonding. 12 of these, located in the NC1 domain, are conserved in all known type IV collagens. Post-translationally, the trimeric structure of the NC1 domains is stabilized by covalent bonds (sulfilimine cross-links) between Lys and Met residues. These cross-links are important for the mechanical stability of the basement membrane. Sulfilimine cross-link is catalyzed by PXDN. In terms of processing, proteolytic processing produces the C-terminal NC1 peptide, arresten. Highly expressed in placenta.

It localises to the secreted. The protein resides in the extracellular space. The protein localises to the extracellular matrix. It is found in the basement membrane. Functionally, type IV collagen is the major structural component of glomerular basement membranes (GBM), forming a 'chicken-wire' meshwork together with laminins, proteoglycans and entactin/nidogen. Its function is as follows. Arresten, comprising the C-terminal NC1 domain, inhibits angiogenesis and tumor formation. The C-terminal half is found to possess the anti-angiogenic activity. Specifically inhibits endothelial cell proliferation, migration and tube formation. The protein is Collagen alpha-1(IV) chain of Homo sapiens (Human).